The sequence spans 455 residues: MTTSRTLRLLVVSALATLSGLGTPVAHAVSPPPIDERWLPESALPAPPRPTVQREVCTEVTAESGRAFGRAERSAQLADLDQVWRLTRGAGQRVAVIDTGVARHRRLPKVVAGGDYVFTGDGTADCDAHGTLVAGIIAAAPDAQSDNFSGVAPDVTLISIRQSSSKFAPVGDPSSTGVGDVDTMAKAVRTAADLGASVINISSIACVPAAAAPDDRALGAALAYAVDVKNAVIVAAAGNTGGAAQCPPQAPGVTRDSVTVAVSPAWYDDYVLTVGSVNAQGEPSAFTLAGPWVDVAATGEAVTSLSPFGDGTVNRLGGQHGSIPISGTSYAAPVVSGLAALIRARFPTLTARQVMQRIESTAHHPPAGWDPLVGNGTVDALAAVSSDSIPQAGTATSDPAPVAVPVPRRSTPGPSDRRALHTAFAGAAICLLALMATLATASRRLRPGRNGIAGD.

The N-terminal stretch at Met1–Val25 is a signal peptide. One can recognise a Peptidase S8 domain in the interval Ser74–Val384. Residues Asp98, His129, and Ser329 each act as charge relay system in the active site. The disordered stretch occupies residues Ile389 to Arg417. The segment covering Thr394–Pro412 has biased composition (low complexity). A helical membrane pass occupies residues Leu432–Ile452.

The protein belongs to the peptidase S8 family.

The protein resides in the cell membrane. The chain is Mycosin-4 from Mycobacterium tuberculosis (strain ATCC 25618 / H37Rv).